Reading from the N-terminus, the 470-residue chain is Methylenetetrahydrofolate--tRNA-(uracil-5-)-methyltransferase TrmFO (470 aa).

10–15 (GAGLAG) contributes to the FAD binding site.

This sequence belongs to the MnmG family. TrmFO subfamily. The cofactor is FAD.

It is found in the cytoplasm. The catalysed reaction is uridine(54) in tRNA + (6R)-5,10-methylene-5,6,7,8-tetrahydrofolate + NADH + H(+) = 5-methyluridine(54) in tRNA + (6S)-5,6,7,8-tetrahydrofolate + NAD(+). It catalyses the reaction uridine(54) in tRNA + (6R)-5,10-methylene-5,6,7,8-tetrahydrofolate + NADPH + H(+) = 5-methyluridine(54) in tRNA + (6S)-5,6,7,8-tetrahydrofolate + NADP(+). Catalyzes the folate-dependent formation of 5-methyl-uridine at position 54 (M-5-U54) in all tRNAs. The protein is Methylenetetrahydrofolate--tRNA-(uracil-5-)-methyltransferase TrmFO of Prochlorococcus marinus subsp. pastoris (strain CCMP1986 / NIES-2087 / MED4).